The chain runs to 54 residues: ATP synthase protein 8 (54 aa).

Residues 13–32 (ITFTFVIITLMVYILSKYIL) form a helical membrane-spanning segment.

The protein belongs to the ATPase protein 8 family. In terms of assembly, F-type ATPases have 2 components, CF(1) - the catalytic core - and CF(0) - the membrane proton channel.

It is found in the mitochondrion membrane. Functionally, mitochondrial membrane ATP synthase (F(1)F(0) ATP synthase or Complex V) produces ATP from ADP in the presence of a proton gradient across the membrane which is generated by electron transport complexes of the respiratory chain. F-type ATPases consist of two structural domains, F(1) - containing the extramembraneous catalytic core and F(0) - containing the membrane proton channel, linked together by a central stalk and a peripheral stalk. During catalysis, ATP synthesis in the catalytic domain of F(1) is coupled via a rotary mechanism of the central stalk subunits to proton translocation. Part of the complex F(0) domain. Minor subunit located with subunit a in the membrane. The protein is ATP synthase protein 8 (atp-8) of Neurospora crassa (strain ATCC 24698 / 74-OR23-1A / CBS 708.71 / DSM 1257 / FGSC 987).